The following is a 158-amino-acid chain: Sorbin and SH3 domain-containing protein 2 (158 aa).

The SoHo domain maps to 1 to 46; sequence MRAATPLQTVDRPKDWYKTMFKQIHMVHKPDDDTDMYNTPYTYNAG. Positions 28-158 are disordered; that stretch reads HKPDDDTDMY…TKPQAGRRKV (131 aa). The span at 50–66 shows a compositional bias: polar residues; that stretch reads SPYSAQSHPAAKTQTYR. The span at 71–81 shows a compositional bias: basic and acidic residues; the sequence is SHSDNGTDAFK. Ser73 carries the post-translational modification Phosphoserine. A compositionally biased stretch (pro residues) spans 86 to 99; that stretch reads PVPPPHVPPPVPPL. Positions 100-136 are enriched in basic and acidic residues; that stretch reads RPRDRSSTEKHDWDPPDRKVDTRKFRSEPRSIFEYEP. Ala153 is modified (alanine amide).

In terms of assembly, interacts with ABL1/c-Abl, ABL2/v-Abl/Arg, ACTN, AKT1, CBL, PALLD and PAK1. Interacts with ABL, CBL, DNM1, DNM2, FLOT1, AFDN, PTK2B/PYK2, SAPAP, SPTAN1, SYNJ1, SYNJ2, VCL/vinculin, and WASF. Interacts with PTPN12 and WASF1 via its SH3 domains; this interaction may mediate the partial PTPN12 and WASF1 translocation to focal adhesion sites. In terms of processing, ubiquitinated by CBL. Dephosphorylated by PTPN12. As to expression, expressed in duodenum.

The protein resides in the cytoplasm. The protein localises to the perinuclear region. Its subcellular location is the apical cell membrane. It is found in the cell junction. It localises to the focal adhesion. The protein resides in the cell projection. The protein localises to the lamellipodium. In terms of biological role, adapter protein that plays a role in the assembling of signaling complexes, being a link between ABL kinases and actin cytoskeleton. Can form complex with ABL1 and CBL, thus promoting ubiquitination and degradation of ABL1 or with AKT1 and PAK1, thus mediating AKT1-mediated activation of PAK1. May play a role in the regulation of pancreatic cell adhesion, possibly by acting on WASF1 phosphorylation, enhancing phosphorylation by ABL1, as well as dephosphorylation by PTPN12. Increases water and sodium absorption in the intestine and gall-bladder. The sequence is that of Sorbin and SH3 domain-containing protein 2 (SORBS2) from Sus scrofa (Pig).